A 417-amino-acid chain; its full sequence is GTP-binding protein YPT11 (417 aa).

The tract at residues Met-1–Glu-34 is disordered. Residues Gly-97–Thr-104, Asp-228–Gln-232, and Asn-292–Asp-295 contribute to the GTP site. Residues Cys-415 and Cys-416 are each lipidated (S-geranylgeranyl cysteine).

It belongs to the small GTPase superfamily. Rab family. In terms of assembly, interacts with MYO2 (via C-terminal tail domain). Interacts with YIF1, YIP3, YIP4 and YIP5.

Its subcellular location is the endoplasmic reticulum membrane. It localises to the bud tip. It is found in the bud neck. In terms of biological role, involved in the positive control of both endoplasmic reticulum (ER) and mitochondrion inheritance during cell divison. Required for the MYO2-dependent retention of newly inherited mitochondria at the bud tip in developing daughter cells. The sequence is that of GTP-binding protein YPT11 (YPT11) from Saccharomyces cerevisiae (strain YJM789) (Baker's yeast).